The chain runs to 149 residues: Calmodulin (149 aa).

N-acetylalanine is present on A2. 4 EF-hand domains span residues 8–43, 44–79, 81–116, and 117–149; these read EQIA…LGQN, PTEA…KMKD, DSEE…LGEK, and LTDE…MMAK. 14 residues coordinate Ca(2+): D21, D23, D25, T27, E32, D57, D59, N61, T63, E68, D94, D96, N98, and E105. The residue at position 116 (K116) is an N6,N6,N6-trimethyllysine. Positions 130, 132, 134, 136, and 141 each coordinate Ca(2+).

Belongs to the calmodulin family.

Its function is as follows. Calmodulin mediates the control of a large number of enzymes, ion channels and other proteins by Ca(2+). Among the enzymes to be stimulated by the calmodulin-Ca(2+) complex are a number of protein kinases and phosphatases. The protein is Calmodulin of Macrocystis pyrifera (Giant kelp).